Reading from the N-terminus, the 546-residue chain is CTP synthase (546 aa).

Residues 1 to 269 (MNSNTKIIFV…DAKLVELLNL (269 aa)) form an amidoligase domain region. S16 contacts CTP. UTP is bound at residue S16. Residues 17 to 22 (SLGKGV) and D74 contribute to the ATP site. Positions 74 and 143 each coordinate Mg(2+). CTP contacts are provided by residues 150–152 (DIE), 190–195 (KTKPTQ), and K226. UTP contacts are provided by residues 190–195 (KTKPTQ) and K226. In terms of domain architecture, Glutamine amidotransferase type-1 spans 294–546 (TIAMVGKYVS…IQAAIENSNN (253 aa)). G356 lines the L-glutamine pocket. C383 functions as the Nucleophile; for glutamine hydrolysis in the catalytic mechanism. L-glutamine-binding positions include 384–387 (LGMQ), E407, and R474. Catalysis depends on residues H519 and E521.

Belongs to the CTP synthase family. As to quaternary structure, homotetramer.

The catalysed reaction is UTP + L-glutamine + ATP + H2O = CTP + L-glutamate + ADP + phosphate + 2 H(+). The enzyme catalyses L-glutamine + H2O = L-glutamate + NH4(+). It catalyses the reaction UTP + NH4(+) + ATP = CTP + ADP + phosphate + 2 H(+). Its pathway is pyrimidine metabolism; CTP biosynthesis via de novo pathway; CTP from UDP: step 2/2. With respect to regulation, allosterically activated by GTP, when glutamine is the substrate; GTP has no effect on the reaction when ammonia is the substrate. The allosteric effector GTP functions by stabilizing the protein conformation that binds the tetrahedral intermediate(s) formed during glutamine hydrolysis. Inhibited by the product CTP, via allosteric rather than competitive inhibition. Catalyzes the ATP-dependent amination of UTP to CTP with either L-glutamine or ammonia as the source of nitrogen. Regulates intracellular CTP levels through interactions with the four ribonucleotide triphosphates. The sequence is that of CTP synthase from Francisella tularensis subsp. tularensis (strain FSC 198).